The sequence spans 326 residues: tRNA-modifying protein YgfZ (326 aa).

Residues Trp-27 and Trp-189 each coordinate folate.

This sequence belongs to the tRNA-modifying YgfZ family.

The protein resides in the cytoplasm. Its function is as follows. Folate-binding protein involved in regulating the level of ATP-DnaA and in the modification of some tRNAs. It is probably a key factor in regulatory networks that act via tRNA modification, such as initiation of chromosomal replication. This chain is tRNA-modifying protein YgfZ, found in Escherichia coli O139:H28 (strain E24377A / ETEC).